We begin with the raw amino-acid sequence, 141 residues long: Cholinesterase (141 aa).

Residue Asn-39 is glycosylated (N-linked (GlcNAc...) asparagine). Position 49-50 (49-50) interacts with substrate; it reads GS. Residue Ser-131 is the Acyl-ester intermediate of the active site. Residue Ser-131 is modified to Phosphoserine.

The protein belongs to the type-B carboxylesterase/lipase family. In terms of assembly, homotetramer; disulfide-linked. Dimer of dimers. As to expression, present in most cells except erythrocytes.

The protein localises to the secreted. The enzyme catalyses an acylcholine + H2O = a carboxylate + choline + H(+). Esterase with broad substrate specificity. Contributes to the inactivation of the neurotransmitter acetylcholine. Can degrade neurotoxic organophosphate esters. The sequence is that of Cholinesterase (BCHE) from Ovis aries (Sheep).